We begin with the raw amino-acid sequence, 827 residues long: Cadherin-17 (827 aa).

Positions 1-25 are cleaved as a signal peptide; the sequence is MVSAQLHFLCLLTLYLTCGYGEEGK. Over 26–786 the chain is Extracellular; sequence FSGPLKPMTF…RQDGIPTVGM (761 aa). Cadherin domains follow at residues 29–127, 128–243, 244–339, 340–448, 449–565, 566–666, and 667–776; these read PLKP…TFLQ, SKYE…APEP, VEIR…PPTC, LSPV…IPIF, ETSN…VPVF, PQRI…PPRL, and AKDY…RPAG. 7 N-linked (GlcNAc...) asparagine glycosylation sites follow: N148, N249, N418, N545, N573, N586, and N721. Residues 787 to 807 form a helical membrane-spanning segment; that stretch reads AVGILLTTFLVIGIILAVVFI. Residues 808-827 are Cytoplasmic-facing; that stretch reads RMRKDKVENPQSPENKPLRS.

In terms of tissue distribution, highest expression is found in intestine with lower expression in spleen, bone marrow, lung and testis. No expression detected in liver, kidney, heart, brain or skeletal muscle. Expressed in precursor B-cells and myeloid cells.

The protein resides in the cell membrane. Its function is as follows. Cadherins are calcium-dependent cell adhesion proteins. They preferentially interact with themselves in a homophilic manner in connecting cells; cadherins may thus contribute to the sorting of heterogeneous cell types. LI-cadherin may have a role in the morphological organization of liver and intestine. The polypeptide is Cadherin-17 (Cdh17) (Mus musculus (Mouse)).